A 377-amino-acid chain; its full sequence is 3-(aryl)acrylate reductase (377 aa).

Residues 121-130, 154-156, Arg-266, Gln-277, and 334-338 each bind FAD; these read FALTEPGAGS, FIT, and QIHGG. The active-site Proton acceptor is Glu-361. 363 to 365 contacts FAD; it reads TSE.

This sequence belongs to the acyl-CoA dehydrogenase family. FAD serves as cofactor.

It catalyses the reaction 3-phenylpropanoate + oxidized [electron-transfer flavoprotein] + H(+) = (E)-cinnamate + reduced [electron-transfer flavoprotein]. It carries out the reaction phloretate + oxidized [electron-transfer flavoprotein] + H(+) = (E)-4-coumarate + reduced [electron-transfer flavoprotein]. The catalysed reaction is indole-3-propanoate + oxidized [electron-transfer flavoprotein] + H(+) = (E)-3-(indol-3-yl)acrylate + reduced [electron-transfer flavoprotein]. The protein operates within amino-acid degradation. Functionally, essential for the reductive metabolism of L-phenylalanine, L-tyrosine and L-tryptophan. Catalyzes the reduction of phenylacrylic acid to phenylpropionic acid, 4-hydroxy-phenylacrylic acid to 4-hydroxy-phenylpropionic acid, and indoleacrylic acid to indolepropionic acid. In Clostridium sporogenes (strain ATCC 15579), this protein is 3-(aryl)acrylate reductase.